Reading from the N-terminus, the 289-residue chain is Inorganic pyrophosphatase (289 aa).

At Ser2 the chain carries N-acetylserine. Lys57 carries the post-translational modification N6-acetyllysine. The Mg(2+) site is built by Asp116, Asp121, and Asp153. Lys228 is modified (N6-acetyllysine). Ser250 bears the Phosphoserine mark.

It belongs to the PPase family. As to quaternary structure, homodimer. Requires Mg(2+) as cofactor.

The protein localises to the cytoplasm. The catalysed reaction is diphosphate + H2O = 2 phosphate + H(+). This Mus musculus (Mouse) protein is Inorganic pyrophosphatase (Ppa1).